We begin with the raw amino-acid sequence, 293 residues long: Amine sulfotransferase (293 aa).

46 to 51 is a binding site for 3'-phosphoadenylyl sulfate; it reads KSGTIW. Residue H101 is the Proton acceptor of the active site. 3'-phosphoadenylyl sulfate is bound by residues R123, S131, 220–225, and 252–254; these read ATFQKM and RKG.

It belongs to the sulfotransferase 1 family.

Its subcellular location is the cytoplasm. It carries out the reaction a primary amine + 3'-phosphoadenylyl sulfate = a sulfamate + adenosine 3',5'-bisphosphate + 2 H(+). Its function is as follows. Sulfotransferase that utilizes 3'-phospho-5'-adenylyl sulfate (PAPS) as sulfonate donor to catalyze the N-sulfonation of amines. The chain is Amine sulfotransferase (Sult3a1) from Mus musculus (Mouse).